A 647-amino-acid polypeptide reads, in one-letter code: Solute carrier family 23 member 2 (647 aa).

The segment covering methionine 1–serine 11 has biased composition (polar residues). The tract at residues methionine 1–alanine 26 is disordered. Over threonine 8–tyrosine 109 the chain is Cytoplasmic. Phosphoserine is present on serine 69. Threonine 74 carries the post-translational modification Phosphothreonine. Phosphoserine is present on serine 77. Position 78 is a phosphothreonine (threonine 78). Phosphoserine is present on serine 80. Residues leucine 110 to glycine 130 traverse the membrane as a helical segment. At aspartate 131 to glutamine 138 the chain is on the extracellular side. Residues leucine 139–cysteine 159 form a helical membrane-spanning segment. A topological domain (cytoplasmic) is located at residue arginine 160. The chain crosses the membrane as a helical span at residues leucine 161–leucine 181. Topologically, residues aspartate 182–alanine 215 are extracellular. Asparagine 187 and asparagine 195 each carry an N-linked (GlcNAc...) asparagine glycan. Residues isoleucine 216 to leucine 236 traverse the membrane as a helical segment. The Cytoplasmic portion of the chain corresponds to arginine 237 to alanine 263. Residues glycine 264–serine 281 traverse the membrane as a helical segment. At glutamine 282 to arginine 285 the chain is on the extracellular side. Positions asparagine 286 to glycine 299 form an intramembrane region, helical. At tryptophan 300 to glutamine 306 the chain is on the extracellular side. A helical transmembrane segment spans residues leucine 307 to phenylalanine 327. Over threonine 328 to glycine 368 the chain is Cytoplasmic. A helical transmembrane segment spans residues methionine 369–isoleucine 389. Over glutamate 390–arginine 414 the chain is Extracellular. Residues glycine 415–serine 435 traverse the membrane as a helical segment. At threonine 436 to tyrosine 458 the chain is on the cytoplasmic side. Residues glycine 459 to leucine 479 form a helical membrane-spanning segment. The Extracellular portion of the chain corresponds to proline 480–proline 482. Residues valine 483–leucine 503 traverse the membrane as a helical segment. Over glutamine 504–asparagine 513 the chain is Cytoplasmic. The chain crosses the membrane as a helical span at residues leucine 514–asparagine 534. At proline 535–aspartate 544 the chain is on the extracellular side. Residues glutamine 545–leucine 565 form a helical membrane-spanning segment. The Cytoplasmic portion of the chain corresponds to aspartate 566–valine 647. Threonine 646 carries the post-translational modification Phosphothreonine.

It belongs to the nucleobase:cation symporter-2 (NCS2) (TC 2.A.40) family. In terms of assembly, interacts with CLSTN3. Phosphorylated. Highly expressed in neural, neuroendocrine, exocrine and endothelial tissues and in osteoblasts. Detected in neurons throughout the central nervous system, in meninges and choroid plexus, in the anterior pituitary, the intermediate lobe, in pancreas, adrenal cortex, gastric glands, and in the inner nuclear layer of the retina.

Its subcellular location is the cell membrane. It catalyses the reaction L-ascorbate(out) + 2 Na(+)(out) = L-ascorbate(in) + 2 Na(+)(in). Sodium/ascorbate cotransporter. Mediates electrogenic uptake of vitamin C, with a stoichiometry of 2 Na(+) for each ascorbate. In Rattus norvegicus (Rat), this protein is Solute carrier family 23 member 2 (Slc23a2).